A 470-amino-acid chain; its full sequence is L-seryl-tRNA(Sec) selenium transferase (470 aa).

The residue at position 292 (Lys-292) is an N6-(pyridoxal phosphate)lysine.

The protein belongs to the SelA family. The cofactor is pyridoxal 5'-phosphate.

The protein resides in the cytoplasm. The enzyme catalyses L-seryl-tRNA(Sec) + selenophosphate + H(+) = L-selenocysteinyl-tRNA(Sec) + phosphate. The protein operates within aminoacyl-tRNA biosynthesis; selenocysteinyl-tRNA(Sec) biosynthesis; selenocysteinyl-tRNA(Sec) from L-seryl-tRNA(Sec) (bacterial route): step 1/1. Functionally, converts seryl-tRNA(Sec) to selenocysteinyl-tRNA(Sec) required for selenoprotein biosynthesis. This chain is L-seryl-tRNA(Sec) selenium transferase, found in Moorella thermoacetica (strain ATCC 39073 / JCM 9320).